The chain runs to 539 residues: Phosphoenolpyruvate carboxykinase (ATP) (539 aa).

3 residues coordinate substrate: Arg-61, Tyr-195, and Lys-201. ATP is bound by residues Lys-201, His-220, and 238–246; that span reads GLSGTGKTT. Positions 201 and 220 each coordinate Mn(2+). Residue Asp-259 coordinates Mn(2+). 3 residues coordinate ATP: Glu-287, Arg-325, and Thr-450. Arg-325 lines the substrate pocket.

Belongs to the phosphoenolpyruvate carboxykinase (ATP) family. Requires Mn(2+) as cofactor.

The protein resides in the cytoplasm. The catalysed reaction is oxaloacetate + ATP = phosphoenolpyruvate + ADP + CO2. Its pathway is carbohydrate biosynthesis; gluconeogenesis. In terms of biological role, involved in the gluconeogenesis. Catalyzes the conversion of oxaloacetate (OAA) to phosphoenolpyruvate (PEP) through direct phosphoryl transfer between the nucleoside triphosphate and OAA. The protein is Phosphoenolpyruvate carboxykinase (ATP) of Methylobacterium radiotolerans (strain ATCC 27329 / DSM 1819 / JCM 2831 / NBRC 15690 / NCIMB 10815 / 0-1).